A 332-amino-acid polypeptide reads, in one-letter code: MVRVAINGFGRIGRLVMRIALSRPNVEVVALNDPFITNDYAAYMFKYDSTHGRYAGEVSHDDKHIIVDGKKIATYQERDPANLPWGSSNVDIAIDSTGVFKELDTAQKHIDAGAKKVVITAPSSTAPMFVMGVNEEKYTSDLKIVSNASCTTNCLAPLAKVINDAFGIEEGLMTTVHSLTATQKTVDGPSHKDWRGGRTASGNIIPSSTGAAKAVGKVLPELQGKLTGMAFRVPTVDVSVVDLTVKLNKETTYDEIKKVVKAAAEGKLKGVLGYTEDAVVSSDFLGDSHSSIFDASAGIQLSPKFVKLVSWYDNEYGYSTRVVDLVEHVAKA.

3 residues coordinate NAD(+): Arg-11, Ile-12, and Asp-33. Glycyl lysine isopeptide (Lys-Gly) (interchain with G-Cter in ubiquitin) cross-links involve residues Lys-46 and Lys-63. Thr-120 provides a ligand contact to NAD(+). 149-151 (SCT) contacts D-glyceraldehyde 3-phosphate. Cys-150 serves as the catalytic Nucleophile. Cys-150 and Cys-154 each carry cysteine persulfide. Residue Lys-160 forms a Glycyl lysine isopeptide (Lys-Gly) (interchain with G-Cter in URM1) linkage. D-glyceraldehyde 3-phosphate is bound by residues Thr-180, 209-210 (TG), and Arg-232. Phosphoserine is present on Ser-302. Lys-307 participates in a covalent cross-link: Glycyl lysine isopeptide (Lys-Gly) (interchain with G-Cter in URM1). The NAD(+) site is built by Asn-314 and Tyr-318.

It belongs to the glyceraldehyde-3-phosphate dehydrogenase family. As to quaternary structure, homotetramer. Conjugated to URM1, a ubiquitin-like protein, in response to oxidative stresses. The attachment of URM1 to lysine residues exclusively depends on the presence of a peroxidatic cysteine in the target protein, with low specificity for the particular residue, motif, or structural context at which urmylation can occur. The URM1-conjugation reaction is mechanistically and directly coupled to the process of cysteine persulfidation, transfering the sulfur atom of the URM1 thiocarboxyl group to redox-active cysteine residues in the target protein if it is exposed to oxidative conditions. Post-translationally, persulfidated on specific redox-active cysteine residues. Persulfidation (also called protein S-sulfhydration) may provide a molecular mechanism that enables cells to protect vulnerable cysteine residues from reactive oxygen species (ROS) under stress conditions.

The protein localises to the cytoplasm. It localises to the mitochondrion. It carries out the reaction D-glyceraldehyde 3-phosphate + phosphate + NAD(+) = (2R)-3-phospho-glyceroyl phosphate + NADH + H(+). The catalysed reaction is NADH + H2O = (6R)-NADHX. The enzyme catalyses NADH + H2O = (6S)-NADHX. It catalyses the reaction NADPH + H2O = (6R)-NADPHX. It carries out the reaction NADPH + H2O = (6S)-NADPHX. The protein operates within carbohydrate degradation; glycolysis; pyruvate from D-glyceraldehyde 3-phosphate: step 1/5. In terms of biological role, glyceraldehyde-3-phosphate dehydrogenase (GAPDH) involved in glycolysis and gluconeogenesis. Catalyzes the reaction of glyceraldehyde-3-phosphate to 1,3 bis-phosphoglycerate. The contribution of the TDH1, TDH2, and TDH3 to the total glyceraldehyde-3-phosphate dehydrogenase activity is 10-15, 25-30, and 50-60%, respectively. As a side activity, catalyzes the hydration of the nicotinamide ring of NADH or NADPH at the C6 position to give the corresponding hydrates, NADHX and NADPHX, which exist as R and S epimers, that cannot act as electron donors or acceptors and inhibit several dehydrogenases, making them toxic. This is Glyceraldehyde-3-phosphate dehydrogenase 3 from Saccharomyces cerevisiae (strain ATCC 204508 / S288c) (Baker's yeast).